The primary structure comprises 193 residues: NAD(P)H-quinone oxidoreductase subunit I (193 aa).

4Fe-4S ferredoxin-type domains are found at residues 56 to 85 (GRIH…VDWE) and 96 to 125 (KHYS…MTEE). 8 residues coordinate [4Fe-4S] cluster: cysteine 65, cysteine 68, cysteine 71, cysteine 75, cysteine 105, cysteine 108, cysteine 111, and cysteine 115. A disordered region spans residues 174 to 193 (NLPKGSQRAGQHPEDLVKAE). The segment covering 184-193 (QHPEDLVKAE) has biased composition (basic and acidic residues).

Belongs to the complex I 23 kDa subunit family. In terms of assembly, NDH-1 is composed of at least 11 different subunits. [4Fe-4S] cluster is required as a cofactor.

It localises to the cellular thylakoid membrane. The enzyme catalyses a plastoquinone + NADH + (n+1) H(+)(in) = a plastoquinol + NAD(+) + n H(+)(out). It carries out the reaction a plastoquinone + NADPH + (n+1) H(+)(in) = a plastoquinol + NADP(+) + n H(+)(out). In terms of biological role, NDH-1 shuttles electrons from an unknown electron donor, via FMN and iron-sulfur (Fe-S) centers, to quinones in the respiratory and/or the photosynthetic chain. The immediate electron acceptor for the enzyme in this species is believed to be plastoquinone. Couples the redox reaction to proton translocation, and thus conserves the redox energy in a proton gradient. The protein is NAD(P)H-quinone oxidoreductase subunit I of Synechocystis sp. (strain ATCC 27184 / PCC 6803 / Kazusa).